A 305-amino-acid chain; its full sequence is Putative cuticle collagen 90 (305 aa).

Disordered regions lie at residues Ala-95–Gly-117 and Pro-146–His-305. 4 triple-helical region regions span residues Gly-96–Ser-125, Gly-142–Ala-204, Gly-208–Asp-252, and Gly-256–Asp-270. Residues Gln-150–Val-162 show a composition bias toward low complexity. Over residues Ala-278 to His-288 the composition is skewed to basic and acidic residues.

It belongs to the cuticular collagen family. Collagen polypeptide chains are complexed within the cuticle by disulfide bonds and other types of covalent cross-links.

In terms of biological role, nematode cuticles are composed largely of collagen-like proteins. The cuticle functions both as an exoskeleton and as a barrier to protect the worm from its environment. This chain is Putative cuticle collagen 90 (col-90), found in Caenorhabditis elegans.